We begin with the raw amino-acid sequence, 467 residues long: Fumarate hydratase class II (467 aa).

Residues 98–100 (SGT), Arg126, 129–132 (HPND), 139–141 (SSN), and Thr187 contribute to the substrate site. Residue His188 is the Proton donor/acceptor of the active site. The active site involves Ser318. Substrate contacts are provided by residues Ser319 and 324–326 (KVN).

This sequence belongs to the class-II fumarase/aspartase family. Fumarase subfamily. Homotetramer.

Its subcellular location is the cytoplasm. It carries out the reaction (S)-malate = fumarate + H2O. It participates in carbohydrate metabolism; tricarboxylic acid cycle; (S)-malate from fumarate: step 1/1. Its function is as follows. Involved in the TCA cycle. Catalyzes the stereospecific interconversion of fumarate to L-malate. The polypeptide is Fumarate hydratase class II (Salmonella typhi).